Here is a 248-residue protein sequence, read N- to C-terminus: Ribonuclease PH (248 aa).

Phosphate contacts are provided by residues Arg86 and 124–126; that span reads GTR.

Belongs to the RNase PH family. Homohexameric ring arranged as a trimer of dimers.

The enzyme catalyses tRNA(n+1) + phosphate = tRNA(n) + a ribonucleoside 5'-diphosphate. Phosphorolytic 3'-5' exoribonuclease that plays an important role in tRNA 3'-end maturation. Removes nucleotide residues following the 3'-CCA terminus of tRNAs; can also add nucleotides to the ends of RNA molecules by using nucleoside diphosphates as substrates, but this may not be physiologically important. Probably plays a role in initiation of 16S rRNA degradation (leading to ribosome degradation) during starvation. The chain is Ribonuclease PH from Listeria monocytogenes serotype 4b (strain CLIP80459).